The sequence spans 512 residues: DNA-binding protein (512 aa).

The interval 1–105 (MAGRGGSQLE…QDSEDEREAE (105 aa)) is disordered. The span at 9–21 (LERRRERTPDRGR) shows a compositional bias: basic and acidic residues. A compositionally biased stretch (pro residues) spans 69–78 (QEQPPPPQQP). A compositionally biased stretch (basic residues) spans 79–88 (PKKKPRKTKH). The segment covering 96–105 (QDSEDEREAE) has biased composition (acidic residues). Residue tyrosine 174 is modified to Phosphotyrosine; by host. Residues cysteine 263 and histidine 265 each contribute to the Zn(2+) site. The interval 276–310 (IEMDVASENGQRALKENPDRAKVTQNRWGRSVVQL) is flexible loop. Residues cysteine 318, cysteine 334, cysteine 376, cysteine 378, cysteine 430, and cysteine 447 each coordinate Zn(2+). The tract at residues 495–512 (VSLPAGHAETSRQNPFDF) is C-terminal arm, DBP binding.

This sequence belongs to the adenoviridae E2A DNA-binding protein family. As to quaternary structure, homomultimerizes on viral ssDNA bound to pTP. Forms a initiation complex with viral polymerase, pTP and hosts NFIA and POU2F1/OCT1. Interacts with host SRCAP.

It localises to the host nucleus. Functionally, plays a role in the elongation phase of viral strand displacement replication by unwinding the template in an ATP-independent fashion, employing its capacity to form multimers. Also enhances the rate of initiation. Released from template upon second strand synthesis. Assembles in complex with viral pTP, viral pol, host NFIA and host POU2F1/OCT1 on viral origin of replication. Covers the whole ssDNA genome during synthesis. The complementary strand synthesis induces its relese from DNA template. May inhibit cellular transcription mediated by the interaction between host SRCAP and CBP. This Homo sapiens (Human) protein is DNA-binding protein.